The following is a 293-amino-acid chain: Excinuclease cho (293 aa).

One can recognise a GIY-YIG domain in the interval Ala-33–Lys-108.

Its function is as follows. Incises the DNA at the 3' side of a lesion during nucleotide excision repair. Incises the DNA farther away from the lesion than UvrC. Not able to incise the 5' site of a lesion. When a lesion remains because UvrC is not able to induce the 3' incision, Cho incises the DNA. Then UvrC makes the 5' incision. The combined action of Cho and UvrC broadens the substrate range of nucleotide excision repair. This is Excinuclease cho (cho) from Salmonella typhimurium (strain LT2 / SGSC1412 / ATCC 700720).